A 203-amino-acid polypeptide reads, in one-letter code: dTTP/UTP pyrophosphatase (203 aa).

Asp70 (proton acceptor) is an active-site residue.

Belongs to the Maf family. YhdE subfamily. A divalent metal cation serves as cofactor.

It is found in the cytoplasm. It carries out the reaction dTTP + H2O = dTMP + diphosphate + H(+). The enzyme catalyses UTP + H2O = UMP + diphosphate + H(+). In terms of biological role, nucleoside triphosphate pyrophosphatase that hydrolyzes dTTP and UTP. May have a dual role in cell division arrest and in preventing the incorporation of modified nucleotides into cellular nucleic acids. This is dTTP/UTP pyrophosphatase (maf-1) from Pseudomonas putida (strain ATCC 47054 / DSM 6125 / CFBP 8728 / NCIMB 11950 / KT2440).